A 710-amino-acid chain; its full sequence is Effector protein AvrPphD (710 aa).

Residues 1–15 are compositionally biased toward polar residues; the sequence is MNPLRSIQHNITTPP. Disordered regions lie at residues 1–36, 136–155, and 173–207; these read MNPL…HPKR, ISFD…SVLS, and SSSL…DSGS.

Its subcellular location is the secreted. Its function is as follows. Effector protein involved in non-host recognition and able to elicit hypersensitive response (HR). This chain is Effector protein AvrPphD (avrPphD), found in Pseudomonas savastanoi pv. phaseolicola (Pseudomonas syringae pv. phaseolicola).